A 195-amino-acid chain; its full sequence is Protein GrpE (195 aa).

The protein belongs to the GrpE family. As to quaternary structure, homodimer.

It localises to the cytoplasm. Functionally, participates actively in the response to hyperosmotic and heat shock by preventing the aggregation of stress-denatured proteins, in association with DnaK and GrpE. It is the nucleotide exchange factor for DnaK and may function as a thermosensor. Unfolded proteins bind initially to DnaJ; upon interaction with the DnaJ-bound protein, DnaK hydrolyzes its bound ATP, resulting in the formation of a stable complex. GrpE releases ADP from DnaK; ATP binding to DnaK triggers the release of the substrate protein, thus completing the reaction cycle. Several rounds of ATP-dependent interactions between DnaJ, DnaK and GrpE are required for fully efficient folding. In Francisella tularensis subsp. tularensis (strain FSC 198), this protein is Protein GrpE.